A 147-amino-acid chain; its full sequence is Large ribosomal subunit protein uL15 (147 aa).

The tract at residues 1 to 47 (MKLHELKPAEGAVRAKRRLGRGTATGQGKTAGRGQKGQWSRSGGGVR) is disordered. Residues 23–35 (TATGQGKTAGRGQ) show a composition bias toward gly residues.

Belongs to the universal ribosomal protein uL15 family. Part of the 50S ribosomal subunit.

Its function is as follows. Binds to the 23S rRNA. The sequence is that of Large ribosomal subunit protein uL15 from Clostridioides difficile (strain 630) (Peptoclostridium difficile).